We begin with the raw amino-acid sequence, 403 residues long: Arginine biosynthesis bifunctional protein ArgJ (403 aa).

Positions 151, 177, 188, 275, 398, and 403 each coordinate substrate. Thr188 (nucleophile) is an active-site residue.

This sequence belongs to the ArgJ family. As to quaternary structure, heterotetramer of two alpha and two beta chains.

It is found in the cytoplasm. The enzyme catalyses N(2)-acetyl-L-ornithine + L-glutamate = N-acetyl-L-glutamate + L-ornithine. It carries out the reaction L-glutamate + acetyl-CoA = N-acetyl-L-glutamate + CoA + H(+). It participates in amino-acid biosynthesis; L-arginine biosynthesis; L-ornithine and N-acetyl-L-glutamate from L-glutamate and N(2)-acetyl-L-ornithine (cyclic): step 1/1. The protein operates within amino-acid biosynthesis; L-arginine biosynthesis; N(2)-acetyl-L-ornithine from L-glutamate: step 1/4. In terms of biological role, catalyzes two activities which are involved in the cyclic version of arginine biosynthesis: the synthesis of N-acetylglutamate from glutamate and acetyl-CoA as the acetyl donor, and of ornithine by transacetylation between N(2)-acetylornithine and glutamate. The polypeptide is Arginine biosynthesis bifunctional protein ArgJ (Caulobacter vibrioides (strain ATCC 19089 / CIP 103742 / CB 15) (Caulobacter crescentus)).